Reading from the N-terminus, the 69-residue chain is DNA gyrase inhibitor YacG (69 aa).

Zn(2+) contacts are provided by Cys13, Cys16, Cys32, and Cys36.

The protein belongs to the DNA gyrase inhibitor YacG family. As to quaternary structure, interacts with GyrB. Zn(2+) is required as a cofactor.

Its function is as follows. Inhibits all the catalytic activities of DNA gyrase by preventing its interaction with DNA. Acts by binding directly to the C-terminal domain of GyrB, which probably disrupts DNA binding by the gyrase. This chain is DNA gyrase inhibitor YacG, found in Neisseria meningitidis serogroup C / serotype 2a (strain ATCC 700532 / DSM 15464 / FAM18).